A 324-amino-acid chain; its full sequence is Beta-ketoacyl-[acyl-carrier-protein] synthase III (324 aa).

Catalysis depends on residues cysteine 114 and histidine 251. The tract at residues 252-256 (QANLR) is ACP-binding. Asparagine 281 is a catalytic residue.

It belongs to the thiolase-like superfamily. FabH family. As to quaternary structure, homodimer.

It is found in the cytoplasm. The enzyme catalyses malonyl-[ACP] + acetyl-CoA + H(+) = 3-oxobutanoyl-[ACP] + CO2 + CoA. It functions in the pathway lipid metabolism; fatty acid biosynthesis. In terms of biological role, catalyzes the condensation reaction of fatty acid synthesis by the addition to an acyl acceptor of two carbons from malonyl-ACP. Catalyzes the first condensation reaction which initiates fatty acid synthesis and may therefore play a role in governing the total rate of fatty acid production. Possesses both acetoacetyl-ACP synthase and acetyl transacylase activities. Its substrate specificity determines the biosynthesis of branched-chain and/or straight-chain of fatty acids. The protein is Beta-ketoacyl-[acyl-carrier-protein] synthase III of Rhodobacter capsulatus (Rhodopseudomonas capsulata).